Consider the following 432-residue polypeptide: Keratin, type I cytoskeletal 18-B (432 aa).

The segment covering 1-21 (MSYSRSMYSSSSVVGGSPYRS) has biased composition (low complexity). Residues 1–44 (MSYSRSMYSSSSVVGGSPYRSLSSAPRFAPGSSAASVHAGPGGS) form a disordered region. Positions 2–82 (SYSRSMYSSS…NVSLMGGAQN (81 aa)) are head. A coil 1A region spans residues 83 to 118 (EKETMQDLNDRLASYLERVRSLETANKELEVQIRQH). The IF rod domain occupies 83–393 (EKETMQDLND…RLLEGDSFDL (311 aa)). Residues 119 to 134 (TEKKGPAKDWSPYYKA) form a linker 1 region. Positions 135-226 (IEDLKKQVFD…KNHQDDVNEL (92 aa)) are coil 1B. The segment at 227-250 (QAQIARSAVTVEVDAPKSQDLGKI) is linker 12. Residues 251–388 (MAELRAQYDG…IHTYRRLLEG (138 aa)) form a coil 2 region. The tail stretch occupies residues 389 to 432 (DSFDLQDAVPTVTTQTVKKVITTTQRIVDGKVVAESNDTEVLKA).

The protein belongs to the intermediate filament family. In terms of assembly, heterotetramer of two type I and two type II keratins. Keratin-18 associates with keratin-8. Post-translationally, phosphorylated. Proteolytically cleaved by caspases during epithelial cell apoptosis.

When phosphorylated, plays a role in filament reorganization. This Xenopus laevis (African clawed frog) protein is Keratin, type I cytoskeletal 18-B (krt18-b).